A 296-amino-acid chain; its full sequence is Protoheme IX farnesyltransferase (296 aa).

Over 1 to 9 the chain is Cytoplasmic; the sequence is MIFKQYLQV. Residues 10 to 28 form a helical membrane-spanning segment; that stretch reads TKPGIIFGNLISVIGGFLL. The Periplasmic portion of the chain corresponds to 29-37; it reads ASKGSIDYP. A helical membrane pass occupies residues 38 to 56; the sequence is LFIYTLVGVSLVVASGCVF. Residues 57–78 are Cytoplasmic-facing; it reads NNYIDRDIDRKMERTKNRVLVK. Residues 79–97 form a helical membrane-spanning segment; sequence GLISPAVSLVYATLLGIAG. The Periplasmic portion of the chain corresponds to 98 to 107; that stretch reads FMLLWFGANP. A helical membrane pass occupies residues 108-126; sequence LACWLGVMGFVVYVGVYSL. Topologically, residues 127–197 are cytoplasmic; it reads YMKRHSVYGT…YQAANIPVLP (71 aa). Residues 198–216 form a helical membrane-spanning segment; sequence VVKGISVAKNHITLYIIAF. The Periplasmic portion of the chain corresponds to 217 to 228; that stretch reads AVATLMLSLGGY. A helical membrane pass occupies residues 229–247; that stretch reads AGYKYLVVAAAVSVWWLGM. At 248–268 the chain is on the cytoplasmic side; that stretch reads ALRGYKVADDRIWARKLFGFS. A helical membrane pass occupies residues 269–287; it reads IIAITALSVMMSVDFMVPD. Over 288-296 the chain is Periplasmic; that stretch reads SHTLLAAVW.

Belongs to the UbiA prenyltransferase family. Protoheme IX farnesyltransferase subfamily.

It localises to the cell inner membrane. It carries out the reaction heme b + (2E,6E)-farnesyl diphosphate + H2O = Fe(II)-heme o + diphosphate. The protein operates within porphyrin-containing compound metabolism; heme O biosynthesis; heme O from protoheme: step 1/1. Functionally, converts heme B (protoheme IX) to heme O by substitution of the vinyl group on carbon 2 of heme B porphyrin ring with a hydroxyethyl farnesyl side group. This Escherichia coli O1:K1 / APEC protein is Protoheme IX farnesyltransferase.